A 181-amino-acid polypeptide reads, in one-letter code: Sporozoite-associated mosquito saliva protein 1 (181 aa).

The signal sequence occupies residues 1-24 (MNSSWRVVVFLGLVILCHSRRARA).

As to expression, salivary gland (at protein level). In terms of tissue distribution, (Microbial infection) Detected with Plasmodium berghei sporozoites isolated from the saliva of infected Anopheles gambiae mosquitoes (at protein level).

It is found in the secreted. Its function is as follows. Decreases host neutrophil chemotaxis induced by N-formylmethionine-leucyl-phenylalanine (fMLP). In terms of biological role, (Microbial infection) Interacts with the surface of Plasmodium berghei sporozoites. Enhances sporozoite gliding activity. Enhances host hepatocyte traversal by sporozoites. The sequence is that of Sporozoite-associated mosquito saliva protein 1 from Anopheles gambiae (African malaria mosquito).